Consider the following 1650-residue polypeptide: HEAT repeat-containing protein 1 homolog (1650 aa).

Positions 1183-1210 are disordered; the sequence is QYDSAASPGSSVAGGRGNRGHRIRQQSL. An HEAT repeat occupies 1609–1645; it reads LLPFLNELIEDENKQVEAQCQKVINSLQHKFGETFWS.

This sequence belongs to the HEATR1/UTP10 family.

The protein localises to the nucleus. The protein resides in the nucleolus. Involved in nucleolar processing of pre-18S ribosomal RNA. Involved in ribosome biosynthesis. The sequence is that of HEAT repeat-containing protein 1 homolog (toe-1) from Caenorhabditis elegans.